The primary structure comprises 232 residues: CMP-N,N'-diacetyllegionaminic acid synthase (232 aa).

Belongs to the CMP-NeuNAc synthase family.

It carries out the reaction N,N-diacetyllegionaminate + CTP = CMP-N,N-diacetyllegionaminate + diphosphate. In terms of biological role, involved in biosynthesis of legionaminic acid (5,7-diamino-3,5,7,9-tetradeoxy-D-glycero-D-galacto-non-2-ulosonic acid)(Leg), a sialic acid-like derivative that is incorporated into virulence-associated cell surface glycoconjugates such as lipopolysaccharide (LPS) which could be a key determinant in the ability of L.pneumophila to inhibit the fusion of phagosomes with lysosomes. LPS contains a majority alpha2,4-linked homomer of legionaminic acid. Catalyzes the conversion of N,N'-diacetyllegionaminic acid (Leg5Ac7Ac) and CTP into CMP-N,N'-diacetyllegionaminic acid (CMP-Leg5Ac7Ac). The chain is CMP-N,N'-diacetyllegionaminic acid synthase (neuA) from Legionella pneumophila subsp. pneumophila (strain Philadelphia 1 / ATCC 33152 / DSM 7513).